The following is a 204-amino-acid chain: Large ribosomal subunit protein uL4 (204 aa).

The interval 47-69 is disordered; the sequence is KAQKTRAEVSGGGKKPWRQKGTG.

This sequence belongs to the universal ribosomal protein uL4 family. As to quaternary structure, part of the 50S ribosomal subunit.

Functionally, one of the primary rRNA binding proteins, this protein initially binds near the 5'-end of the 23S rRNA. It is important during the early stages of 50S assembly. It makes multiple contacts with different domains of the 23S rRNA in the assembled 50S subunit and ribosome. In terms of biological role, forms part of the polypeptide exit tunnel. This chain is Large ribosomal subunit protein uL4, found in Cellvibrio japonicus (strain Ueda107) (Pseudomonas fluorescens subsp. cellulosa).